A 375-amino-acid chain; its full sequence is uncharacterized protein (375 aa).

The next 7 helical transmembrane spans lie at 21–41 (LLLL…IVLF), 66–86 (IIVF…FCVS), 160–180 (LVGV…PGIV), 203–223 (LVGL…HLLI), 234–254 (FYMV…FHLF), 289–309 (VISF…YFLI), and 338–358 (FFLM…MLFF).

It is found in the cell membrane. This is an uncharacterized protein from Mycoplasma genitalium (strain ATCC 33530 / DSM 19775 / NCTC 10195 / G37) (Mycoplasmoides genitalium).